The chain runs to 33 residues: Neurotoxin Nk-3FTx (33 aa).

Disulfide bonds link C3–C24 and C6–C11.

Expressed by the venom gland.

Its subcellular location is the secreted. Its function is as follows. Possible voltage-gated potassium channel (Kv) blocker. Decreases amplitude of compound action potential and conduction velocity in toad sciatic nerve. Has only mild anticoagulant activity even at a concentration of 5ug/ml. Shows no cytotoxicity towards human cell lines. This is Neurotoxin Nk-3FTx from Naja kaouthia (Monocled cobra).